A 273-amino-acid polypeptide reads, in one-letter code: Phycobilisome 32.1 kDa linker polypeptide, phycocyanin-associated, rod 2 (273 aa).

The PBS-linker domain maps to M1–R180. The CpcD-like domain occupies N220–A273.

It belongs to the phycobilisome linker protein family. Part of 2 PBS rod complexes, the conventional CpcG-PBS rod and a photosystem I-specific CpcL-PBS rod, both of which include ferredoxin--NADP reductase (petH). CpcG-PBS has on average 3 stacked phycocyanin hexamers (PC, CpcA and CpcB). Linker CpcG connects the PC stack to the thylakoid, the hexamers are linked by 1 copy of CpcC1, 1 copy of CpcC2 and the stack is terminated by a single copy of CpcD. The CpcL-PBS has on average 5 stacked phycocyanin hexamers (PC, CpcA and CpcB). Linker CpcL connects the PC stack to the thylakoid, the hexamers are linked by 1 copy of CpcC1, 3 copies of CpcC2 and the stack is terminated by a single copy of CpcD. Interacts with the C-phycocyanin (PC) beta subunit (cpcB), it may fit into the center of the PC hexamer.

It is found in the cellular thylakoid membrane. Its function is as follows. Rod linker protein, associated with phycocyanin. Linker polypeptides determine the state of aggregation and the location of the disk-shaped phycobiliprotein units within the phycobilisome and modulate their spectroscopic properties in order to mediate a directed and optimal energy transfer. This Synechocystis sp. (strain ATCC 27184 / PCC 6803 / Kazusa) protein is Phycobilisome 32.1 kDa linker polypeptide, phycocyanin-associated, rod 2 (cpcC2).